We begin with the raw amino-acid sequence, 89 residues long: Small ribosomal subunit protein uS15 (89 aa).

Belongs to the universal ribosomal protein uS15 family. In terms of assembly, part of the 30S ribosomal subunit. Forms a bridge to the 50S subunit in the 70S ribosome, contacting the 23S rRNA.

Its function is as follows. One of the primary rRNA binding proteins, it binds directly to 16S rRNA where it helps nucleate assembly of the platform of the 30S subunit by binding and bridging several RNA helices of the 16S rRNA. In terms of biological role, forms an intersubunit bridge (bridge B4) with the 23S rRNA of the 50S subunit in the ribosome. The polypeptide is Small ribosomal subunit protein uS15 (Syntrophomonas wolfei subsp. wolfei (strain DSM 2245B / Goettingen)).